Consider the following 284-residue polypeptide: Cell division protein ZipA (284 aa).

Position 1 (methionine 1) is a topological domain, periplasmic. The helical transmembrane segment at 2–22 (EIGLREWLIVIGIIVIAGILF) threads the bilayer. At 23–284 (DGWRRMRGGK…FERRALTQKR (262 aa)) the chain is on the cytoplasmic side. The interval 47-140 (PDDEGSAELL…SASHSDKDQP (94 aa)) is disordered. Basic and acidic residues-rich tracts occupy residues 62 to 75 (LDTHKEPQLDEHDL), 83 to 102 (REPRESSSSKRGKRGGEPHQ), and 119 to 140 (SRDDDFPVEESKSASHSDKDQP).

The protein belongs to the ZipA family. In terms of assembly, interacts with FtsZ via their C-terminal domains.

Its subcellular location is the cell inner membrane. Essential cell division protein that stabilizes the FtsZ protofilaments by cross-linking them and that serves as a cytoplasmic membrane anchor for the Z ring. Also required for the recruitment to the septal ring of downstream cell division proteins. The chain is Cell division protein ZipA from Pseudomonas fluorescens (strain ATCC BAA-477 / NRRL B-23932 / Pf-5).